Reading from the N-terminus, the 507-residue chain is Glucose-6-phosphate isomerase (507 aa).

The active-site Proton donor is glutamate 337. Active-site residues include histidine 368 and lysine 478.

The protein belongs to the GPI family.

The protein resides in the cytoplasm. The catalysed reaction is alpha-D-glucose 6-phosphate = beta-D-fructose 6-phosphate. It participates in carbohydrate biosynthesis; gluconeogenesis. It functions in the pathway carbohydrate degradation; glycolysis; D-glyceraldehyde 3-phosphate and glycerone phosphate from D-glucose: step 2/4. Its function is as follows. Catalyzes the reversible isomerization of glucose-6-phosphate to fructose-6-phosphate. The chain is Glucose-6-phosphate isomerase from Novosphingobium aromaticivorans (strain ATCC 700278 / DSM 12444 / CCUG 56034 / CIP 105152 / NBRC 16084 / F199).